The chain runs to 479 residues: Probable periplasmic serine endoprotease DegP-like (479 aa).

A signal peptide spans 1–27 (MSIPRLKSYLSMFAAVLMLGQVLSAQA). Residues histidine 117, aspartate 147, and serine 220 each act as charge relay system in the active site. Residues 218-220 (GNS) and 275-279 (LGVVI) each bind substrate. 2 PDZ domains span residues 264–355 (LKKD…IRNG) and 361–468 (DVTI…LRQG). The interval 368-395 (PDDDADIGTGTGADGSAERSSNRLGVSV) is disordered.

It belongs to the peptidase S1C family.

The protein resides in the periplasm. It carries out the reaction Acts on substrates that are at least partially unfolded. The cleavage site P1 residue is normally between a pair of hydrophobic residues, such as Val-|-Val.. Functionally, might be efficient in the degradation of transiently denatured and unfolded proteins which accumulate in the periplasm following stress conditions. The protein is Probable periplasmic serine endoprotease DegP-like of Pseudomonas putida (strain W619).